Reading from the N-terminus, the 763-residue chain is Cadherin-like protein 26 (763 aa).

Positions 1–20 (MDTRGCAWLLLLLSLPQGQS) are cleaved as a signal peptide. Cadherin domains lie at 21 to 140 (HQPL…APQF), 141 to 250 (PEKE…MPTF), 251 to 371 (MEDR…PPAF), and 370 to 478 (AFHP…APTL). Residues 21–590 (HQPLHRSKRR…SECEEPSDTW (570 aa)) lie on the Extracellular side of the membrane. 3 N-linked (GlcNAc...) asparagine glycosylation sites follow: N56, N60, and N146. 2 N-linked (GlcNAc...) asparagine glycosylation sites follow: N394 and N440. Residues 591 to 611 (LLWWALSPVGAALMVLSAALL) traverse the membrane as a helical segment. Residues 612–763 (CLLRCSCTFG…AMCFTSRVPS (152 aa)) lie on the Cytoplasmic side of the membrane.

As to quaternary structure, homodimer. Component of a cadherin:catenin adhesion complex composed of at least of CDH26, beta-catenin/CTNNB1, alpha-catenin/CTNNA1 and p120 catenin/CTNND1. N-glycosylated.

The protein resides in the cell membrane. Cadherins are calcium-dependent cell adhesion proteins. They preferentially interact with themselves in a homophilic manner in connecting cells; cadherins may thus contribute to the sorting of heterogeneous cell types. Ligand for integrins alpha-E/beta-7, ITGAE:ITGAB7, alpha-4/beta-7, ITGA4:ITGAB7 and alpha-4/beta-1, ITGA4:ITGAB1 through which modulates CD4(+) T cells activation. The chain is Cadherin-like protein 26 (Cdh26) from Mus musculus (Mouse).